Reading from the N-terminus, the 448-residue chain is MPDLQELWNYLQEKFQTDLTTVGFNAWIKTAKPLAFRANELLIEVPSVLHKEYWENNLATKVVEGAYEFAEIELTPIFVLPGESDNLTPLEPEEEHVLTKAETPTFLRETHLNSKYTFDTFVTGKGNQMAHAAALVVSEEPGVLYNPLFLYGGVGLGKTHLMQAIGHQLLESKPETNVKYVTSEAFANDFINSIQTKNQEKFRQEYRNVDLLLVDDIQFFADKEGTQEEFFHTFNDLYNDKKQIVLTSDRLPNEIPKLQERLVSRFKWGLPVDITPPDLETRIAILRNKADAEHLEIPEDTLSYIAGQIDSNVRELEGALVRVQAYATMQNAEITTSLAADALKGLKLNGKSSQLSIAKIQSVVAKYYSLTVADLKGRKRVKEIVLPRQIAMYLAREMTDSSLPKIGQEFGGKDHTTVMHAHERISQSLTTDQNLKDAILDLKNTMKS.

Positions 1-72 (MPDLQELWNY…VEGAYEFAEI (72 aa)) are domain I, interacts with DnaA modulators. A domain II region spans residues 72–110 (IELTPIFVLPGESDNLTPLEPEEEHVLTKAETPTFLRET). Positions 111-327 (HLNSKYTFDT…GALVRVQAYA (217 aa)) are domain III, AAA+ region. ATP contacts are provided by G155, G157, K158, and T159. Positions 328 to 448 (TMQNAEITTS…ILDLKNTMKS (121 aa)) are domain IV, binds dsDNA.

This sequence belongs to the DnaA family. In terms of assembly, oligomerizes as a right-handed, spiral filament on DNA at oriC.

The protein resides in the cytoplasm. In terms of biological role, plays an essential role in the initiation and regulation of chromosomal replication. ATP-DnaA binds to the origin of replication (oriC) to initiate formation of the DNA replication initiation complex once per cell cycle. Binds the DnaA box (a 9 base pair repeat at the origin) and separates the double-stranded (ds)DNA. Forms a right-handed helical filament on oriC DNA; dsDNA binds to the exterior of the filament while single-stranded (ss)DNA is stabiized in the filament's interior. The ATP-DnaA-oriC complex binds and stabilizes one strand of the AT-rich DNA unwinding element (DUE), permitting loading of DNA polymerase. After initiation quickly degrades to an ADP-DnaA complex that is not apt for DNA replication. Binds acidic phospholipids. In Latilactobacillus sakei subsp. sakei (strain 23K) (Lactobacillus sakei subsp. sakei), this protein is Chromosomal replication initiator protein DnaA.